Reading from the N-terminus, the 193-residue chain is Penicillin-binding protein activator LpoB (193 aa).

The N-terminal stretch at 1–16 (MKKYLGVILAALVLTG) is a signal peptide. Cysteine 17 is lipidated: N-palmitoyl cysteine. The S-diacylglycerol cysteine moiety is linked to residue cysteine 17. Positions 17-55 (CPSRPPEPTEPPATIEPVEPQVPTTPTLPPGESVPQPPK) are disordered. Low complexity predominate over residues 28-41 (PATIEPVEPQVPTT).

The protein belongs to the LpoB family. In terms of assembly, interacts with PBP1b.

The protein resides in the cell outer membrane. In terms of biological role, regulator of peptidoglycan synthesis that is essential for the function of penicillin-binding protein 1B (PBP1b). The polypeptide is Penicillin-binding protein activator LpoB (Pectobacterium carotovorum subsp. carotovorum (strain PC1)).